Consider the following 446-residue polypeptide: Na(+)-translocating NADH-quinone reductase subunit A (446 aa).

The protein belongs to the NqrA family. Composed of six subunits; NqrA, NqrB, NqrC, NqrD, NqrE and NqrF.

The enzyme catalyses a ubiquinone + n Na(+)(in) + NADH + H(+) = a ubiquinol + n Na(+)(out) + NAD(+). Functionally, NQR complex catalyzes the reduction of ubiquinone-1 to ubiquinol by two successive reactions, coupled with the transport of Na(+) ions from the cytoplasm to the periplasm. NqrA to NqrE are probably involved in the second step, the conversion of ubisemiquinone to ubiquinol. This Psychromonas ingrahamii (strain DSM 17664 / CCUG 51855 / 37) protein is Na(+)-translocating NADH-quinone reductase subunit A.